The primary structure comprises 335 residues: Galactosylgalactosylxylosylprotein 3-beta-glucuronosyltransferase 1 (335 aa).

Topologically, residues 1–6 (MPKRRD) are cytoplasmic. The essential for transport from endoplasmic reticulum to Golgi apparatus and interaction with SAR1A stretch occupies residues 3 to 5 (KRR). Residues 7-27 (ILAIVLIVLPWTLLVTVWHQS) traverse the membrane as a helical; Signal-anchor for type II membrane protein segment. Residues 28–335 (TIAPLLTTHK…KGFTDPTVEI (308 aa)) lie on the Lumenal side of the membrane. 92–94 (PTY) provides a ligand contact to UDP-alpha-D-glucuronate. Residues threonine 104 and threonine 109 each carry the phosphothreonine modification. Residue aspartate 123 coordinates UDP-alpha-D-glucuronate. The N-linked (GlcNAc...) asparagine glycan is linked to asparagine 141. Residues arginine 166 and arginine 171 each coordinate UDP-alpha-D-glucuronate. Asparagine 185 is a glycosylation site (N-linked (GlcNAc...) asparagine). 196-198 (DDD) is a binding site for UDP-alpha-D-glucuronate. Aspartate 198 lines the Mn(2+) pocket. The interval 246-255 (FDPHRPFAID) is interaction with galactose moiety of substrate glycoprotein. Glutamate 285 acts as the Proton donor/acceptor in catalysis. A glycan (N-linked (GlcNAc...) asparagine) is linked at asparagine 304. 312–314 (HTR) is a binding site for UDP-alpha-D-glucuronate.

The protein belongs to the glycosyltransferase 43 family. As to quaternary structure, homodimer. Interacts with SAR1A. The cofactor is Mn(2+). Post-translationally, the soluble form derives from the membrane form by proteolytic processing.

The protein localises to the golgi apparatus membrane. The protein resides in the secreted. It catalyses the reaction 3-O-(beta-D-galactosyl-(1-&gt;3)-beta-D-galactosyl-(1-&gt;4)-beta-D-xylosyl)-L-seryl-[protein] + UDP-alpha-D-glucuronate = 3-O-(beta-D-GlcA-(1-&gt;3)-beta-D-Gal-(1-&gt;3)-beta-D-Gal-(1-&gt;4)-beta-D-Xyl)-L-seryl-[protein] + UDP + H(+). It functions in the pathway protein modification; protein glycosylation. Involved in the biosynthesis of L2/HNK-1 carbohydrate epitope on glycoproteins. Can also play a role in glycosaminoglycan biosynthesis. Substrates include asialo-orosomucoid (ASOR), asialo-fetuin, and asialo-neural cell adhesion molecule. Requires sphingomyelin for activity: stearoyl-sphingomyelin was the most effective, followed by palmitoyl-sphingomyelin and lignoceroyl-sphingomyelin. Activity was demonstrated only for sphingomyelin with a saturated fatty acid and not for that with an unsaturated fatty acid, regardless of the length of the acyl group. The sequence is that of Galactosylgalactosylxylosylprotein 3-beta-glucuronosyltransferase 1 from Canis lupus familiaris (Dog).